A 128-amino-acid chain; its full sequence is MDSFVQKYTNGFKSILNKVEKTDFATIKSEFQYNQANLEWVESKVSDLNNYLLDPNQFSDVVSFKKIANEKLDLFVKNHGNKLPFFLFTSFVLAIFSFVSVYVRHHYDLDFNDPDAIISFFRELAFHE.

This is an uncharacterized protein from Mycoplasma genitalium (strain ATCC 33530 / DSM 19775 / NCTC 10195 / G37) (Mycoplasmoides genitalium).